Consider the following 78-residue polypeptide: Small ribosomal subunit protein uS17 (78 aa).

Belongs to the universal ribosomal protein uS17 family. Part of the 30S ribosomal subunit.

Its function is as follows. One of the primary rRNA binding proteins, it binds specifically to the 5'-end of 16S ribosomal RNA. The sequence is that of Small ribosomal subunit protein uS17 from Rhizobium meliloti (strain 1021) (Ensifer meliloti).